A 185-amino-acid polypeptide reads, in one-letter code: TRAF-interacting protein with FHA domain-containing protein A (185 aa).

Threonine 9 carries the post-translational modification Phosphothreonine. In terms of domain architecture, FHA spans 48–104; sequence VKFGRNSNMCQYTFQDKQVSRVQFALQPFKQFNSSVLSFEIKNMSKKTSLMVDNQEL.

It belongs to the TIFA family. In terms of assembly, homooligomer; homooligomerizes following phosphorylation at Thr-9. Interacts with IRAK1, TRAF2 and TRAF6. Interacts with TIFAB; binding to TIFAB inhibits TRAF6 activation, possibly by inducing a conformational change in TIFA. Interacts with ZCCHC11; binding to ZCCHC11 suppresses the TRAF6-dependent activation of NF-kappa-B. Post-translationally, phosphorylated at Thr-9 following detection of ADP-D-glycero-beta-D-manno-heptose (ADP-Heptose) by ALPK1. Phosphorylation at Thr-9 by ALPK1 leads to the formation of an intermolecular binding between the FHA domain and phosphorylated Thr-9, promoting TIFA oligomerization and TIFA-mediated NF-kappa-B activation.

The protein localises to the cytoplasm. In terms of biological role, adapter molecule that plays a key role in the activation of pro-inflammatory NF-kappa-B signaling following detection of bacterial pathogen-associated molecular pattern metabolites (PAMPs). Promotes activation of an innate immune response by inducing the oligomerization and polyubiquitination of TRAF6, which leads to the activation of TAK1 and IKK through a proteasome-independent mechanism. TIFA-dependent innate immune response is triggered by ADP-D-glycero-beta-D-manno-heptose (ADP-Heptose), a potent PAMP present in all Gram-negative and some Gram-positive bacteria: ADP-Heptose is recognized by ALPK1, which phosphorylates TIFA at Thr-9, leading to TIFA homooligomerization and subsequent activation of pro-inflammatory NF-kappa-B signaling. This chain is TRAF-interacting protein with FHA domain-containing protein A, found in Rattus norvegicus (Rat).